We begin with the raw amino-acid sequence, 288 residues long: Alpha-acetolactate decarboxylase (288 aa).

The first 23 residues, 1-23, serve as a signal peptide directing secretion; the sequence is MNIKYFLIFLILLAVTSFTLFSG.

The protein belongs to the alpha-acetolactate decarboxylase family.

It catalyses the reaction (2S)-2-acetolactate + H(+) = (R)-acetoin + CO2. It functions in the pathway polyol metabolism; (R,R)-butane-2,3-diol biosynthesis; (R,R)-butane-2,3-diol from pyruvate: step 2/3. Its function is as follows. Converts acetolactate into acetoin. This chain is Alpha-acetolactate decarboxylase, found in Methanosarcina mazei (strain ATCC BAA-159 / DSM 3647 / Goe1 / Go1 / JCM 11833 / OCM 88) (Methanosarcina frisia).